We begin with the raw amino-acid sequence, 360 residues long: Histidinol-phosphate aminotransferase (360 aa).

N6-(pyridoxal phosphate)lysine is present on lysine 221.

The protein belongs to the class-II pyridoxal-phosphate-dependent aminotransferase family. Histidinol-phosphate aminotransferase subfamily. As to quaternary structure, homodimer. The cofactor is pyridoxal 5'-phosphate.

The catalysed reaction is L-histidinol phosphate + 2-oxoglutarate = 3-(imidazol-4-yl)-2-oxopropyl phosphate + L-glutamate. It participates in amino-acid biosynthesis; L-histidine biosynthesis; L-histidine from 5-phospho-alpha-D-ribose 1-diphosphate: step 7/9. In Desulfitobacterium hafniense (strain DSM 10664 / DCB-2), this protein is Histidinol-phosphate aminotransferase.